A 150-amino-acid chain; its full sequence is SPbeta prophage-derived uncharacterized protein YoqH (150 aa).

The signal sequence occupies residues 1-23 (MKRFILVLSFLSIIVAYPIQTNA).

The chain is SPbeta prophage-derived uncharacterized protein YoqH (yoqH) from Bacillus subtilis (strain 168).